An 827-amino-acid chain; its full sequence is Sporozoite surface protein 2 (827 aa).

A signal peptide spans 1 to 22; it reads MKLLGNSKYIFVVLLLCISVFL. A VWFA domain is found at 43–228; that stretch reads DIHILLDGSG…NMIKPFLTKV (186 aa). Residues 235 to 281 enclose the TSP type-1 domain; that stretch reads IAHCGKWEEWSECSTTCDEGRKIRRRQILHPGCVSEMTTPCKVRDCP. 3 disulfides stabilise this stretch: Cys238/Cys267, Cys247/Cys275, and Cys251/Cys280. A disordered region spans residues 278–761; sequence RDCPQIPIPP…NKNQSKSNNG (484 aa). Over residues 301-388 the composition is skewed to low complexity; sequence EEPVNPNDPN…NNPNDPSNPN (88 aa). Residues 306-392 are 29 X 3 AA tandem repeats; it reads PNDPNDPNNP…DPSNPNNPNP (87 aa). The segment covering 392–407 has biased composition (basic residues); it reads PKKRNPKRRNPNKPKP. Residues 402 to 514 form a 20 tandem tetra-/hexapeptide repeats region; it reads PNKPKPNKPN…EPSNPNEPSN (113 aa). Residues 408 to 464 show a composition bias toward pro residues; sequence NKPNPNKPNPNEPSNPNKPNPNEPSNPNKPNPNEPSNPNKPNPNEPSNPNKPNPNEP. Positions 465–567 are enriched in low complexity; the sequence is LNPNEPSNPN…KEPSNPNEPS (103 aa). Repeat copies occupy residues 603–613 and 614–624. Residues 603–624 form a 2 X 11 AA tandem repeats region; it reads PEESNPKEPINPEESNPKEPIN. The span at 657 to 671 shows a compositional bias: polar residues; that stretch reads KGNNIPSNLPENPSD. The segment covering 709–724 has biased composition (basic and acidic residues); it reads YKGHEERIPKPHRSND. Residues 764–787 form a helical membrane-spanning segment; sequence IAGGIIGGLAILGCAGVGYNFIAG.

The protein localises to the cell membrane. The chain is Sporozoite surface protein 2 (SSP2) from Plasmodium yoelii yoelii.